The following is a 242-amino-acid chain: Ribonuclease 3 (242 aa).

The 129-residue stretch at 18–146 folds into the RNase III domain; the sequence is APAIEAKLGY…IIGAIYLDGG (129 aa). Glu-59 lines the Mg(2+) pocket. The active site involves Asp-63. Residues Asp-132 and Glu-135 each contribute to the Mg(2+) site. The active site involves Glu-135. Positions 172 to 241 constitute a DRBM domain; it reads NWKALLQDYC…AADALSRVEL (70 aa). Basic and acidic residues predominate over residues 218–227; it reads RGKGTSKKEA. The tract at residues 218–242 is disordered; it reads RGKGTSKKEAQQAAAADALSRVELP.

Belongs to the ribonuclease III family. Homodimer. The cofactor is Mg(2+).

The protein resides in the cytoplasm. The enzyme catalyses Endonucleolytic cleavage to 5'-phosphomonoester.. In terms of biological role, digests double-stranded RNA. Involved in the processing of primary rRNA transcript to yield the immediate precursors to the large and small rRNAs (23S and 16S). Processes some mRNAs, and tRNAs when they are encoded in the rRNA operon. Processes pre-crRNA and tracrRNA of type II CRISPR loci if present in the organism. This chain is Ribonuclease 3, found in Protochlamydia amoebophila (strain UWE25).